The sequence spans 363 residues: UDP-N-acetylglucosamine--N-acetylmuramyl-(pentapeptide) pyrophosphoryl-undecaprenol N-acetylglucosamine transferase (363 aa).

UDP-N-acetyl-alpha-D-glucosamine-binding positions include 14 to 16 (TGG), Arg-171, Ser-200, and Gln-290.

It belongs to the glycosyltransferase 28 family. MurG subfamily.

It is found in the cell inner membrane. The enzyme catalyses di-trans,octa-cis-undecaprenyl diphospho-N-acetyl-alpha-D-muramoyl-L-alanyl-D-glutamyl-meso-2,6-diaminopimeloyl-D-alanyl-D-alanine + UDP-N-acetyl-alpha-D-glucosamine = di-trans,octa-cis-undecaprenyl diphospho-[N-acetyl-alpha-D-glucosaminyl-(1-&gt;4)]-N-acetyl-alpha-D-muramoyl-L-alanyl-D-glutamyl-meso-2,6-diaminopimeloyl-D-alanyl-D-alanine + UDP + H(+). Its pathway is cell wall biogenesis; peptidoglycan biosynthesis. Its function is as follows. Cell wall formation. Catalyzes the transfer of a GlcNAc subunit on undecaprenyl-pyrophosphoryl-MurNAc-pentapeptide (lipid intermediate I) to form undecaprenyl-pyrophosphoryl-MurNAc-(pentapeptide)GlcNAc (lipid intermediate II). The protein is UDP-N-acetylglucosamine--N-acetylmuramyl-(pentapeptide) pyrophosphoryl-undecaprenol N-acetylglucosamine transferase of Borreliella burgdorferi (strain ATCC 35210 / DSM 4680 / CIP 102532 / B31) (Borrelia burgdorferi).